Here is a 567-residue protein sequence, read N- to C-terminus: Proline--tRNA ligase (567 aa).

Belongs to the class-II aminoacyl-tRNA synthetase family. ProS type 1 subfamily. Homodimer.

The protein resides in the cytoplasm. It carries out the reaction tRNA(Pro) + L-proline + ATP = L-prolyl-tRNA(Pro) + AMP + diphosphate. Catalyzes the attachment of proline to tRNA(Pro) in a two-step reaction: proline is first activated by ATP to form Pro-AMP and then transferred to the acceptor end of tRNA(Pro). As ProRS can inadvertently accommodate and process non-cognate amino acids such as alanine and cysteine, to avoid such errors it has two additional distinct editing activities against alanine. One activity is designated as 'pretransfer' editing and involves the tRNA(Pro)-independent hydrolysis of activated Ala-AMP. The other activity is designated 'posttransfer' editing and involves deacylation of mischarged Ala-tRNA(Pro). The misacylated Cys-tRNA(Pro) is not edited by ProRS. The protein is Proline--tRNA ligase of Staphylococcus aureus (strain COL).